The following is a 192-amino-acid chain: Large ribosomal subunit protein uL6 (192 aa).

Belongs to the universal ribosomal protein uL6 family. Component of the large ribosomal subunit.

The protein localises to the cytoplasm. In terms of biological role, component of the large ribosomal subunit. The ribosome is a large ribonucleoprotein complex responsible for the synthesis of proteins in the cell. The protein is Large ribosomal subunit protein uL6 (rpl9) of Ictalurus punctatus (Channel catfish).